The following is a 502-amino-acid chain: ATP synthase subunit alpha (502 aa).

Residues 117–139 (GMGPVLTSKTRPIESPAPGVMDR) are disordered. 169-176 (GDRQTGKT) contacts ATP.

The protein belongs to the ATPase alpha/beta chains family. F-type ATPases have 2 components, CF(1) - the catalytic core - and CF(0) - the membrane proton channel. CF(1) has five subunits: alpha(3), beta(3), gamma(1), delta(1), epsilon(1). CF(0) has three main subunits: a(1), b(2) and c(9-12). The alpha and beta chains form an alternating ring which encloses part of the gamma chain. CF(1) is attached to CF(0) by a central stalk formed by the gamma and epsilon chains, while a peripheral stalk is formed by the delta and b chains.

It is found in the cell membrane. The enzyme catalyses ATP + H2O + 4 H(+)(in) = ADP + phosphate + 5 H(+)(out). Its function is as follows. Produces ATP from ADP in the presence of a proton gradient across the membrane. The alpha chain is a regulatory subunit. This is ATP synthase subunit alpha from Bacillus licheniformis (strain ATCC 14580 / DSM 13 / JCM 2505 / CCUG 7422 / NBRC 12200 / NCIMB 9375 / NCTC 10341 / NRRL NRS-1264 / Gibson 46).